A 225-amino-acid polypeptide reads, in one-letter code: GrpE protein homolog 2, mitochondrial (225 aa).

A mitochondrion-targeting transit peptide spans 1-32; that stretch reads MAVRSLWAGRLRVQRLLAWSAAWESKGWPLPF. N6-acetyllysine is present on lysine 142.

It belongs to the GrpE family. Probable component of the PAM complex at least composed of a mitochondrial HSP70 protein, GRPEL1 or GRPEL2, TIMM44, TIMM16/PAM16 and TIMM14/DNAJC19.

Its subcellular location is the mitochondrion matrix. Its function is as follows. Essential component of the PAM complex, a complex required for the translocation of transit peptide-containing proteins from the inner membrane into the mitochondrial matrix in an ATP-dependent manner. Seems to control the nucleotide-dependent binding of mitochondrial HSP70 to substrate proteins. Stimulates ATPase activity of mt-HSP70. May also serve to modulate the interconversion of oligomeric (inactive) and monomeric (active) forms of mt-HSP70. The sequence is that of GrpE protein homolog 2, mitochondrial (GRPEL2) from Homo sapiens (Human).